We begin with the raw amino-acid sequence, 73 residues long: DNA-binding protein S1FA3 (73 aa).

Positions 47–52 (PPRKKK) match the Nuclear localization signal motif. The span at 47–63 (PPRKKKPVSKKKMKKEK) shows a compositional bias: basic residues. The tract at residues 47–73 (PPRKKKPVSKKKMKKEKMKQGVQVPGE) is disordered.

This sequence belongs to the S1FA transcription factor family.

The protein resides in the nucleus. DNA-binding protein that specifically recognizes a negative element (S1F) within the RPS1 promoter. This is DNA-binding protein S1FA3 (S1FA3) from Arabidopsis thaliana (Mouse-ear cress).